A 101-amino-acid polypeptide reads, in one-letter code: MMFERVLFLSVYLFSIGIYGLITSRNMVRALICLELILNSINLNLVTFSDLFDSRQLKGDIFAIFVIALAAAEAAIGLSILSSIHRNRKSTRINQSNFLNN.

Transmembrane regions (helical) follow at residues 2–22 (MFER…YGLI), 32–52 (ICLE…SDLF), and 61–81 (IFAI…LSIL).

The protein belongs to the complex I subunit 4L family. NDH is composed of at least 16 different subunits, 5 of which are encoded in the nucleus.

The protein localises to the plastid. It localises to the chloroplast thylakoid membrane. It carries out the reaction a plastoquinone + NADH + (n+1) H(+)(in) = a plastoquinol + NAD(+) + n H(+)(out). The catalysed reaction is a plastoquinone + NADPH + (n+1) H(+)(in) = a plastoquinol + NADP(+) + n H(+)(out). Its function is as follows. NDH shuttles electrons from NAD(P)H:plastoquinone, via FMN and iron-sulfur (Fe-S) centers, to quinones in the photosynthetic chain and possibly in a chloroplast respiratory chain. The immediate electron acceptor for the enzyme in this species is believed to be plastoquinone. Couples the redox reaction to proton translocation, and thus conserves the redox energy in a proton gradient. In Zea mays (Maize), this protein is NAD(P)H-quinone oxidoreductase subunit 4L, chloroplastic.